We begin with the raw amino-acid sequence, 291 residues long: Phosphate import ATP-binding protein PstB (291 aa).

The region spanning 43–286 (ANVKDLSFWY…PKHAMTEEYI (244 aa)) is the ABC transporter domain. 75 to 82 (GASGCGKS) is a binding site for ATP.

Belongs to the ABC transporter superfamily. Phosphate importer (TC 3.A.1.7) family. The complex is composed of two ATP-binding proteins (PstB), two transmembrane proteins (PstC and PstA) and a solute-binding protein (PstS).

The protein resides in the cell inner membrane. It catalyses the reaction phosphate(out) + ATP + H2O = ADP + 2 phosphate(in) + H(+). Part of the ABC transporter complex PstSACB involved in phosphate import. Responsible for energy coupling to the transport system. The protein is Phosphate import ATP-binding protein PstB of Alcaligenes faecalis.